Consider the following 331-residue polypeptide: Phosphate acyltransferase (331 aa).

Belongs to the PlsX family. In terms of assembly, homodimer. Probably interacts with PlsY.

The protein resides in the cytoplasm. The catalysed reaction is a fatty acyl-[ACP] + phosphate = an acyl phosphate + holo-[ACP]. The protein operates within lipid metabolism; phospholipid metabolism. Its function is as follows. Catalyzes the reversible formation of acyl-phosphate (acyl-PO(4)) from acyl-[acyl-carrier-protein] (acyl-ACP). This enzyme utilizes acyl-ACP as fatty acyl donor, but not acyl-CoA. The chain is Phosphate acyltransferase from Mesoplasma florum (strain ATCC 33453 / NBRC 100688 / NCTC 11704 / L1) (Acholeplasma florum).